The primary structure comprises 496 residues: 2,3-bisphosphoglycerate-independent phosphoglycerate mutase (496 aa).

Asp12 and Ser62 together coordinate Mn(2+). The active-site Phosphoserine intermediate is Ser62. Substrate is bound by residues His121, Arg150 to Asp151, Arg181, Arg187, Arg252 to Arg255, and Lys317. Residues Asp384, His388, Asp425, His426, and His444 each coordinate Mn(2+).

The protein belongs to the BPG-independent phosphoglycerate mutase family. In terms of assembly, monomer. Mn(2+) serves as cofactor.

It catalyses the reaction (2R)-2-phosphoglycerate = (2R)-3-phosphoglycerate. It functions in the pathway carbohydrate degradation; glycolysis; pyruvate from D-glyceraldehyde 3-phosphate: step 3/5. Catalyzes the interconversion of 2-phosphoglycerate and 3-phosphoglycerate. The polypeptide is 2,3-bisphosphoglycerate-independent phosphoglycerate mutase (Anaplasma phagocytophilum (strain HZ)).